Here is a 303-residue protein sequence, read N- to C-terminus: Ubiquinone biosynthesis protein COQ4, mitochondrial (303 aa).

Residues His-191, Asp-192, His-195, and Glu-207 each contribute to the Zn(2+) site.

This sequence belongs to the COQ4 family. As to quaternary structure, component of a multi-subunit COQ enzyme complex, composed of at least COQ3, COQ4, COQ5, COQ6, COQ7 and COQ9. It depends on Zn(2+) as a cofactor.

It localises to the mitochondrion inner membrane. It catalyses the reaction a 4-hydroxy-3-methoxy-5-(all-trans-polyprenyl)benzoate + H(+) = a 2-methoxy-6-(all-trans-polyprenyl)phenol + CO2. It functions in the pathway cofactor biosynthesis; ubiquinone biosynthesis. In terms of biological role, lyase that catalyzes the C1-decarboxylation of 4-hydroxy-3-methoxy-5-(all-trans-polyprenyl)benzoic acid into 2-methoxy-6-(all-trans-polyprenyl)phenol during ubiquinone biosynthesis. The sequence is that of Ubiquinone biosynthesis protein COQ4, mitochondrial from Komagataella phaffii (strain GS115 / ATCC 20864) (Yeast).